The primary structure comprises 571 residues: Urease subunit alpha (571 aa).

The Urease domain maps to 133–571; sequence GGIDTHVHFI…LPLTQRYFLF (439 aa). 3 residues coordinate Ni(2+): histidine 138, histidine 140, and lysine 221. The residue at position 221 (lysine 221) is an N6-carboxylysine. Residue histidine 223 participates in substrate binding. 2 residues coordinate Ni(2+): histidine 250 and histidine 276. Catalysis depends on histidine 324, which acts as the Proton donor. Aspartate 364 is a Ni(2+) binding site.

It belongs to the metallo-dependent hydrolases superfamily. Urease alpha subunit family. In terms of assembly, heterotrimer of UreA (gamma), UreB (beta) and UreC (alpha) subunits. Three heterotrimers associate to form the active enzyme. Ni cation serves as cofactor. Carboxylation allows a single lysine to coordinate two nickel ions.

The protein resides in the cytoplasm. The catalysed reaction is urea + 2 H2O + H(+) = hydrogencarbonate + 2 NH4(+). It participates in nitrogen metabolism; urea degradation; CO(2) and NH(3) from urea (urease route): step 1/1. The chain is Urease subunit alpha from Staphylococcus epidermidis (strain ATCC 35984 / DSM 28319 / BCRC 17069 / CCUG 31568 / BM 3577 / RP62A).